The sequence spans 262 residues: Tryptophan synthase alpha chain (262 aa).

Catalysis depends on proton acceptor residues Glu48 and Asp59.

It belongs to the TrpA family. As to quaternary structure, tetramer of two alpha and two beta chains.

It catalyses the reaction (1S,2R)-1-C-(indol-3-yl)glycerol 3-phosphate + L-serine = D-glyceraldehyde 3-phosphate + L-tryptophan + H2O. It functions in the pathway amino-acid biosynthesis; L-tryptophan biosynthesis; L-tryptophan from chorismate: step 5/5. In terms of biological role, the alpha subunit is responsible for the aldol cleavage of indoleglycerol phosphate to indole and glyceraldehyde 3-phosphate. The polypeptide is Tryptophan synthase alpha chain (Helicobacter pylori (strain ATCC 700392 / 26695) (Campylobacter pylori)).